Here is a 171-residue protein sequence, read N- to C-terminus: Outer membrane lipoprotein Blc (171 aa).

The signal sequence occupies residues 1–15 (MRAIFLILCSVLLNG). Residue Cys-16 is the site of N-palmitoyl cysteine attachment. Cys-16 is lipidated: S-diacylglycerol cysteine.

The protein belongs to the calycin superfamily. Lipocalin family. Homodimer.

The protein localises to the cell outer membrane. Its function is as follows. Involved in the storage or transport of lipids necessary for membrane maintenance under stressful conditions. Displays a binding preference for lysophospholipids. This is Outer membrane lipoprotein Blc (blc) from Vibrio cholerae serotype O1 (strain ATCC 39315 / El Tor Inaba N16961).